Reading from the N-terminus, the 855-residue chain is Envelope glycoprotein gp160 (855 aa).

The N-terminal stretch at 1-31 (MRAREIERNCPNLWKWGIMLLGILMICSAAD) is a signal peptide. Residues 32-683 (NLWVTVYYGV…ITQWLWYIKI (652 aa)) lie on the Extracellular side of the membrane. An intrachain disulfide couples C53 to C73. N-linked (GlcNAc...) asparagine; by host glycosylation is found at N87, N129, N140, N145, N154, N158, N186, N189, N199, N236, N243, N264, N278, N291, and N297. Cystine bridges form between C118–C207, C125–C198, C130–C155, C220–C249, and C230–C241. The V1 stretch occupies residues 130–154 (CTDESDEWMGNVTGKNVTEDIRMKN). Residues 155–198 (CSFNITTVVRDKTKQVHALFYRLDIVPIDNDNSTNSTNYRLINC) are V2. The segment at 298–331 (CTRPYKNTRQSTPIGLGQALYTTRGRTKIIGQAH) is V3. Residues C298 and C332 are joined by a disulfide bond. N333, N340, and N355 each carry an N-linked (GlcNAc...) asparagine; by host glycan. The tract at residues 364-374 (SSGGDAEITTH) is CD4-binding loop. Cystine bridges form between C378–C444 and C385–C417. The segment at 385–417 (CNTSGLFNSTWNINNSEGANSTESDNKLITLQC) is V4. N386, N392, N398, N404, N443, N447, N460, N461, and N464 each carry an N-linked (GlcNAc...) asparagine; by host glycan. V5 stretches follow at residues 459–470 (TNNSSNETFRPG) and 462–470 (SSNETFRPG). The interval 511–531 (AIGLGAMFLGFLGAAGSTMGA) is fusion peptide. The interval 573–591 (KQLQARILAVERYLKDQQL) is immunosuppression. An intrachain disulfide couples C597 to C603. Residues N610, N615, N624, N636, and N673 are each glycosylated (N-linked (GlcNAc...) asparagine; by host). The stretch at 632–666 (REIDNYTGLIYRLIEESQTQQEKNEQELLELDKWA) forms a coiled coil. The MPER; binding to GalCer stretch occupies residues 661–682 (ELDKWASLWNWFNITQWLWYIK). The helical transmembrane segment at 684-704 (FIMIVGGLIGLRIVFAVLSLV) threads the bilayer. The Cytoplasmic segment spans residues 705 to 855 (NRVRQGYSPL…IRQGLERLLL (151 aa)). The YXXL motif; contains endocytosis signal motif lies at 711-714 (YSPL). C763 carries S-palmitoyl cysteine; by host lipidation. A Di-leucine internalization motif motif is present at residues 854-855 (LL).

The protein belongs to the HIV-1 env protein family. The mature envelope protein (Env) consists of a homotrimer of non-covalently associated gp120-gp41 heterodimers. The resulting complex protrudes from the virus surface as a spike. There seems to be as few as 10 spikes on the average virion. Interacts with host CD4, CCR5 and CXCR4. Gp120 also interacts with the C-type lectins CD209/DC-SIGN and CLEC4M/DC-SIGNR (collectively referred to as DC-SIGN(R)). Gp120 and gp41 interact with GalCer. Gp120 interacts with host ITGA4/ITGB7 complex; on CD4+ T-cells, this interaction results in rapid activation of integrin ITGAL/LFA-1, which facilitates efficient cell-to-cell spreading of HIV-1. Gp120 interacts with cell-associated heparan sulfate; this interaction increases virus infectivity on permissive cells and may be involved in infection of CD4- cells. As to quaternary structure, the mature envelope protein (Env) consists of a homotrimer of non-covalently associated gp120-gp41 heterodimers. The resulting complex protrudes from the virus surface as a spike. There seems to be as few as 10 spikes on the average virion. In terms of processing, highly glycosylated by host. The high number of glycan on the protein is reffered to as 'glycan shield' because it contributes to hide protein sequence from adaptive immune system. Palmitoylation of the transmembrane protein and of Env polyprotein (prior to its proteolytic cleavage) is essential for their association with host cell membrane lipid rafts. Palmitoylation is therefore required for envelope trafficking to classical lipid rafts, but not for viral replication. Post-translationally, specific enzymatic cleavages in vivo yield mature proteins. Envelope glycoproteins are synthesized as an inactive precursor that is heavily N-glycosylated and processed likely by host cell furin in the Golgi to yield the mature SU and TM proteins. The cleavage site between SU and TM requires the minimal sequence [KR]-X-[KR]-R. About 2 of the 9 disulfide bonds of gp41 are reduced by P4HB/PDI, following binding to CD4 receptor.

It localises to the virion membrane. It is found in the host cell membrane. Its subcellular location is the host endosome membrane. Functionally, oligomerizes in the host endoplasmic reticulum into predominantly trimers. In a second time, gp160 transits in the host Golgi, where glycosylation is completed. The precursor is then proteolytically cleaved in the trans-Golgi and thereby activated by cellular furin or furin-like proteases to produce gp120 and gp41. In terms of biological role, attaches the virus to the host lymphoid cell by binding to the primary receptor CD4. This interaction induces a structural rearrangement creating a high affinity binding site for a chemokine coreceptor like CXCR4 and/or CCR5. Acts as a ligand for CD209/DC-SIGN and CLEC4M/DC-SIGNR, which are respectively found on dendritic cells (DCs), and on endothelial cells of liver sinusoids and lymph node sinuses. These interactions allow capture of viral particles at mucosal surfaces by these cells and subsequent transmission to permissive cells. HIV subverts the migration properties of dendritic cells to gain access to CD4+ T-cells in lymph nodes. Virus transmission to permissive T-cells occurs either in trans (without DCs infection, through viral capture and transmission), or in cis (following DCs productive infection, through the usual CD4-gp120 interaction), thereby inducing a robust infection. In trans infection, bound virions remain infectious over days and it is proposed that they are not degraded, but protected in non-lysosomal acidic organelles within the DCs close to the cell membrane thus contributing to the viral infectious potential during DCs' migration from the periphery to the lymphoid tissues. On arrival at lymphoid tissues, intact virions recycle back to DCs' cell surface allowing virus transmission to CD4+ T-cells. Its function is as follows. Acts as a class I viral fusion protein. Under the current model, the protein has at least 3 conformational states: pre-fusion native state, pre-hairpin intermediate state, and post-fusion hairpin state. During fusion of viral and target intracellular membranes, the coiled coil regions (heptad repeats) assume a trimer-of-hairpins structure, positioning the fusion peptide in close proximity to the C-terminal region of the ectodomain. The formation of this structure appears to drive apposition and subsequent fusion of viral and target cell membranes. Complete fusion occurs in host cell endosomes and is dynamin-dependent, however some lipid transfer might occur at the plasma membrane. The virus undergoes clathrin-dependent internalization long before endosomal fusion, thus minimizing the surface exposure of conserved viral epitopes during fusion and reducing the efficacy of inhibitors targeting these epitopes. Membranes fusion leads to delivery of the nucleocapsid into the cytoplasm. This chain is Envelope glycoprotein gp160, found in Homo sapiens (Human).